The chain runs to 613 residues: DBH-like monooxygenase protein 1 (613 aa).

Positions 1–19 are cleaved as a signal peptide; that stretch reads MCGWPLLVLWALLPATAAG. Topologically, residues 20 to 587 are lumenal; that stretch reads SPGRSYPHRV…PLVCEKAASP (568 aa). In terms of domain architecture, DOMON spans 35 to 148; that stretch reads GKYWLHWGRQ…STVRVIWAYH (114 aa). The N-linked (GlcNAc...) asparagine glycan is linked to asparagine 114. Residue tyrosine 203 is part of the active site. 2 disulfides stabilise this stretch: cysteine 205-cysteine 257 and cysteine 242-cysteine 269. Histidine 235 and histidine 236 together coordinate Cu cation. Residue asparagine 247 is glycosylated (N-linked (GlcNAc...) asparagine). Cu cation contacts are provided by histidine 307, histidine 389, histidine 391, and methionine 464. Disulfide bonds link cysteine 364–cysteine 480, cysteine 368–cysteine 550, and cysteine 443–cysteine 465. Residue histidine 389 is part of the active site. 2 N-linked (GlcNAc...) asparagine glycosylation sites follow: asparagine 476 and asparagine 517. The helical transmembrane segment at 588 to 608 threads the bilayer; that stretch reads PLHGIFSLRLLTCALLLGSML.

Belongs to the copper type II ascorbate-dependent monooxygenase family. Cu(2+) serves as cofactor. Post-translationally, N-glycosylated. As to expression, broadly exprressed, with highest levels in salivary gland and ovary.

The protein localises to the endoplasmic reticulum membrane. The protein is DBH-like monooxygenase protein 1 (Moxd1) of Mus musculus (Mouse).